A 141-amino-acid chain; its full sequence is D-aminoacyl-tRNA deacylase (141 aa).

Residues Gly-133–Pro-134 carry the Gly-cisPro motif, important for rejection of L-amino acids motif.

The protein belongs to the DTD family. In terms of assembly, homodimer.

It is found in the cytoplasm. The catalysed reaction is glycyl-tRNA(Ala) + H2O = tRNA(Ala) + glycine + H(+). It carries out the reaction a D-aminoacyl-tRNA + H2O = a tRNA + a D-alpha-amino acid + H(+). Functionally, an aminoacyl-tRNA editing enzyme that deacylates mischarged D-aminoacyl-tRNAs. Also deacylates mischarged glycyl-tRNA(Ala), protecting cells against glycine mischarging by AlaRS. Acts via tRNA-based rather than protein-based catalysis; rejects L-amino acids rather than detecting D-amino acids in the active site. By recycling D-aminoacyl-tRNA to D-amino acids and free tRNA molecules, this enzyme counteracts the toxicity associated with the formation of D-aminoacyl-tRNA entities in vivo and helps enforce protein L-homochirality. The protein is D-aminoacyl-tRNA deacylase of Nautilia profundicola (strain ATCC BAA-1463 / DSM 18972 / AmH).